An 892-amino-acid polypeptide reads, in one-letter code: von Willebrand factor A domain-containing protein 7 (892 aa).

A signal peptide spans 1-27; that stretch reads MLPVEVPLSQLGPPVLLLQLLLPPTSA. Asn-54 carries N-linked (GlcNAc...) asparagine glycosylation. The segment at 231 to 272 is disordered; it reads YFGTNPPKPPGKCSHGGRFDQSSSQPPRGGINKDSTSPSFSP. The region spanning 313–495 is the VWFA domain; that stretch reads ASSLSFVLDT…HIRDVAAVVG (183 aa).

It localises to the secreted. The sequence is that of von Willebrand factor A domain-containing protein 7 (Vwa7) from Rattus norvegicus (Rat).